The following is a 586-amino-acid chain: MTQYEWLQTTLFLVLLLAVVKPMGAFMAKVFQGERTMLSPLLVPCENLLYRICGVNRDEEMDWKRYAVAVLLFNLALFVSLFAILMLQHLLPLNPQKFPAYTWQLALNTAISFVTNTNWQAYSGESAASYFTQTVGLAVHNFVSAATGIAVAIAVIRGFARRRTSMLGNFWVDMTRCTLYVLLPISLIGALILVSQGVIQNFSDYKTVPLVQPITYDKPKADGKGNPVTGRVTVKDITIPMGPVASQEAIKELGTNGGGFFNANSAHPYENPTPISNMVEIFLILLIPFALTSTFGVMVGNTRQGWAILGVMLLMMAISFAVLQGVETSGNPLVAKLGVHGVNMEGKEVRFGLAGASLFTVATTGTSCGAVATMHDSLTPLGGMIPLGLILLGEIAPGGVGSGLYTMLAFVVIAVFVAGLMIGRTPEFLGKKIEVREMWMSIITVLAAGVVVLILSGVAMITPQAVASKANPGAHGLSEVLYAFASMANNNGSAFAGLNANVDFYTILGSLAMLVGRFAPAVAVLAMAGSLAEKKYVPPSLGTLPTDKVPFALWLMLVILIVGALTFFPALSLGPLVEHLTMLGGK.

12 consecutive transmembrane segments (helical) span residues 11–31, 67–87, 136–156, 179–199, 279–299, 306–326, 351–371, 381–401, 403–423, 442–462, 507–527, and 551–571; these read LFLV…AKVF, AVAV…ILML, GLAV…IAVI, LYVL…QGVI, VEIF…GVMV, WAIL…LQGV, FGLA…CGAV, LGGM…GGVG, GLYT…LMIG, IITV…AMIT, ILGS…VLAM, and FALW…FPAL.

This sequence belongs to the KdpA family. As to quaternary structure, the system is composed of three essential subunits: KdpA, KdpB and KdpC.

The protein localises to the cell inner membrane. In terms of biological role, part of the high-affinity ATP-driven potassium transport (or Kdp) system, which catalyzes the hydrolysis of ATP coupled with the electrogenic transport of potassium into the cytoplasm. This subunit binds the periplasmic potassium ions and delivers the ions to the membrane domain of KdpB through an intramembrane tunnel. This is Potassium-transporting ATPase potassium-binding subunit from Geobacter metallireducens (strain ATCC 53774 / DSM 7210 / GS-15).